We begin with the raw amino-acid sequence, 507 residues long: RNA-binding protein Nova-1 (507 aa).

A disordered region spans residues 1–44 (MMAAAPIQQNGTHTGVPIDLDPPDSRKRPLEAPPEAGSTKRTNT). The Bipartite nuclear localization signal signature appears at 27–43 (KRPLEAPPEAGSTKRTN). A KH 1 domain is found at 49–116 (QYFLKVLIPS…EALNAVHGFI (68 aa)). Residues 139–171 (QTTVNPDRIKQTLPSSPTTTKSSPSDPMTTSRA) are disordered. Residues 150–169 (TLPSSPTTTKSSPSDPMTTS) are compositionally biased toward low complexity. A Phosphoserine modification is found at Ser-154. 2 KH domains span residues 171 to 237 (ANQV…VELI) and 421 to 488 (KDVV…QYLI). The segment at 419-503 (GSKDVVEIAV…YEQGVRAANP (85 aa)) is required for RNA binding.

Interacts with PTBP2; the interaction is direct. In terms of tissue distribution, expressed in cerebellum, brain stem, hippocampus, and frontal cortex.

It is found in the nucleus. Its function is as follows. Functions to regulate alternative splicing in neurons by binding pre-mRNA in a sequence-specific manner to activate exon inclusion or exclusion. It binds specifically to the sequences 5'-YCAY-3' and regulates splicing in only a subset of regulated exons. Binding to an exonic 5'-YCAY-3' cluster changes the protein complexes assembled on pre-mRNA, blocking U1 snRNP binding and exon inclusion, whereas binding to an intronic 5'-YCAY-3' cluster enhances spliceosome assembly and exon inclusion. Binding to 5'-YCAY-3' clusters results in a local and asymmetric action to regulate spliceosome assembly and alternative splicing in neurons. Binding to an exonic 5'-YCAY-3' cluster changed the protein complexes assembled on pre-mRNA, blocking U1 snRNP (small nuclear ribonucleoprotein) binding and exon inclusion, whereas binding to an intronic 5'-YCAY-3' cluster enhanced spliceosome assembly and exon inclusion. With NOVA1, they perform unique biological functions in different brain areas and cell types. Autoregulates its own expression by acting as a splicing repressor. Acts to activate the inclusion of exon E3A in the glycine receptor alpha-2 chain and of exon E9 in gamma-aminobutyric-acid receptor gamma-2 subunit via a distal downstream UCAU-rich intronic splicing enhancer. Acts to regulate a novel glycine receptor alpha-2 chain splice variant (alpha-2N) in developing spinal cord. The sequence is that of RNA-binding protein Nova-1 from Homo sapiens (Human).